A 508-amino-acid chain; its full sequence is General transcription factor IIF subunit 1 (508 aa).

Residue Ala-2 is modified to N-acetylalanine. Residue Thr-156 is modified to Phosphothreonine. Residues 177–446 (MQQRRLKDQD…TPSSGDVQVT (270 aa)) form a disordered region. Residues Ser-217, Ser-218, Ser-221, and Ser-224 each carry the phosphoserine modification. A compositionally biased stretch (basic residues) spans 232–251 (SKAKKKAPVTKAGRKKKKKK). 2 stretches are compositionally biased toward acidic residues: residues 255 to 270 (DEAF…EGQE) and 303 to 325 (EQSE…EEEE). A Phosphothreonine modification is found at Thr-331. Over residues 343-355 (DDSDSSEESDIDS) the composition is skewed to acidic residues. Positions 364–374 (AKKKTPPKRER) are enriched in basic residues. Residues Ser-377, Ser-380, Ser-381, and Ser-385 each carry the phosphoserine modification. The span at 378–388 (GGSSKGTSRPG) shows a compositional bias: polar residues. The residue at position 389 (Thr-389) is a Phosphothreonine. Over residues 389-406 (TPSAEAASTSSTLRAAAS) the composition is skewed to low complexity. Position 391 is a phosphoserine (Ser-391). The residue at position 407 (Lys-407) is an N6-acetyllysine. Residues 428–443 (GPQSLSGKSTPSSGDV) are compositionally biased toward polar residues. Phosphoserine is present on residues Ser-431, Ser-433, and Ser-436. Thr-437 carries the post-translational modification Phosphothreonine. Position 440 is a phosphoserine (Ser-440).

Belongs to the TFIIF alpha subunit family. As to quaternary structure, heterodimer of an alpha and a beta subunit. Interacts with GTF2F2, CTDP1, TAF6/TAFII80 and URI1. Interacts with GTF2B (via C-terminus and preferentially via acetylated form); this interaction prevents binding of GTF2B to GTF2F2. Part of TBP-based Pol II pre-initiation complex (PIC), in which Pol II core assembles with general transcription factors and other specific initiation factors including GTF2E1, GTF2E2, GTF2F1, GTF2F2, TCEA1, ERCC2, ERCC3, GTF2H2, GTF2H3, GTF2H4, GTF2H5, GTF2A1, GTF2A2, GTF2B and TBP; this large multi-subunit PIC complex mediates DNA unwinding and targets Pol II core to the transcription start site where the first phosphodiester bond forms. Phosphorylated on Ser and other residues by TAF1 and casein kinase II-like kinases.

It is found in the nucleus. Its function is as follows. TFIIF is a general transcription initiation factor that binds to RNA polymerase II and helps to recruit it to the initiation complex in collaboration with TFIIB. It promotes transcription elongation. This Mus musculus (Mouse) protein is General transcription factor IIF subunit 1 (Gtf2f1).